A 498-amino-acid chain; its full sequence is MSDQPVNTPELRPVLPFSFARAQQILLLQDESVTVAEVVCVPDTPALALLEARRVAGVPLAVSQVSPEEFERQLVMRYQRDSEEARRLMEDIGNDIDFYTLAEELPDSDDLLDGEDDAPIIRLINAMLTEAIKHKASDIHIETFERHLLIRFRIDGVLREILRPQRQLASLLVSRIKVMAKLDIAEKRVPQDGRMALRIGGRAIDVRVSTLPSNYGERVVLRLLDKNSVRLDLEALGMAEHNRRQLDTLIHRPHGIILVTGPTGSGKSTTLYAALSRLNSAERNIMTVEDPIEYELEGIGQTQVNPKVDMTFARGLRAILRQDPDVVLVGEIRDGETAQIAVQASLTGHLVLSTLHTNSALGALSRLQDMGIEPFLLSTSLLGVLAQRLVRTLCPSCRQPYVINDEQAQQTGLAAGTTLYHPGGCEKCNYSGYRGRTGIHELLLIDDTVRTAIHHGESELGIARMLGDKRITIRQDGLDKVLAGVTTWEEVVRVTKEE.

Zn(2+) is bound by residues Cys-394, Cys-397, Cys-425, and Cys-428.

The protein belongs to the GSP E family. Forms homooligomers; most probably hexamers. Interacts with OutL/GspL. Zn(2+) is required as a cofactor.

Its subcellular location is the cell inner membrane. The enzyme catalyses ATP + H2O + cellular proteinSide 1 = ADP + phosphate + cellular proteinSide 2.. Its function is as follows. ATPase component of the type II secretion system required for the energy-dependent secretion of extracellular factors such as proteases and toxins from the periplasm. Acts as a molecular motor to provide the energy that is required for assembly of the pseudopilus and the extrusion of substrates generated in the cytoplasm. The sequence is that of Type II secretion system protein E (outE) from Dickeya dadantii (strain 3937) (Erwinia chrysanthemi (strain 3937)).